We begin with the raw amino-acid sequence, 167 residues long: Leptin (167 aa).

The N-terminal stretch at 1-21 is a signal peptide; it reads MRCGPLCRFLWLWPYLSYIEA. Cysteine 117 and cysteine 167 form a disulfide bridge.

It belongs to the leptin family.

Its subcellular location is the secreted. In terms of biological role, key player in the regulation of energy balance and body weight control. Once released into the circulation, has central and peripheral effects by binding LEPR, found in many tissues, which results in the activation of several major signaling pathways. In the hypothalamus, acts as an appetite-regulating factor that induces a decrease in food intake and an increase in energy consumption by inducing anorexinogenic factors and suppressing orexigenic neuropeptides, also regulates bone mass and secretion of hypothalamo-pituitary-adrenal hormones. In the periphery, increases basal metabolism, influences reproductive function, regulates pancreatic beta-cell function and insulin secretion, is pro-angiogenic for endothelial cell and affects innate and adaptive immunity. In the arcuate nucleus of the hypothalamus, activates by depolarization POMC neurons inducing FOS and SOCS3 expression to release anorexigenic peptides and inhibits by hyperpolarization NPY neurons inducing SOCS3 with a consequent reduction on release of orexigenic peptides. In addition to its known satiety inducing effect, has a modulatory role in nutrient absorption. In the intestine, reduces glucose absorption by enterocytes by activating PKC and leading to a sequential activation of p38, PI3K and ERK signaling pathways which exerts an inhibitory effect on glucose absorption. Acts as a growth factor on certain tissues, through the activation of different signaling pathways increases expression of genes involved in cell cycle regulation such as CCND1, via JAK2-STAT3 pathway, or VEGFA, via MAPK1/3 and PI3K-AKT1 pathways. May also play an apoptotic role via JAK2-STAT3 pathway and up-regulation of BIRC5 expression. Pro-angiogenic, has mitogenic activity on vascular endothelial cells and plays a role in matrix remodeling by regulating the expression of matrix metalloproteinases (MMPs) and tissue inhibitors of metalloproteinases (TIMPs). In innate immunity, modulates the activity and function of neutrophils by increasing chemotaxis and the secretion of oxygen radicals. Increases phagocytosis by macrophages and enhances secretion of pro-inflammatory mediators. Increases cytotoxic ability of NK cells. Plays a pro-inflammatory role, in synergy with IL1B, by inducing NOS2 which promotes the production of IL6, IL8 and Prostaglandin E2, through a signaling pathway that involves JAK2, PI3K, MAP2K1/MEK1 and MAPK14/p38. In adaptive immunity, promotes the switch of memory T-cells towards T helper-1 cell immune responses. Increases CD4(+)CD25(-) T-cell proliferation and reduces autophagy during TCR (T-cell receptor) stimulation, through MTOR signaling pathway activation and BCL2 up-regulation. The sequence is that of Leptin (LEP) from Ursus thibetanus (Asiatic black bear).